The primary structure comprises 264 residues: General transcription factor IIF subunit 2 (264 aa).

Belongs to the TFIIF beta subunit family. As to quaternary structure, heterodimer of an alpha and a beta subunit.

It localises to the nucleus. Functionally, TFIIF is a general transcription initiation factor that binds to RNA polymerase II and helps to recruit it to the initiation complex in collaboration with TFIIB. In Xenopus laevis (African clawed frog), this protein is General transcription factor IIF subunit 2 (gtf2f2).